Consider the following 333-residue polypeptide: Cytosolic Fe-S cluster assembly factor NBP35 (333 aa).

Positions 32, 46, 49, and 55 each coordinate [4Fe-4S] cluster. 85 to 92 (GKGGVGKS) contributes to the ATP binding site. Positions 258 and 261 each coordinate [4Fe-4S] cluster.

The protein belongs to the Mrp/NBP35 ATP-binding proteins family. NUBP1/NBP35 subfamily. In terms of assembly, heterotetramer of 2 NBP35 and 2 CFD1 chains. [4Fe-4S] cluster is required as a cofactor.

The protein resides in the cytoplasm. Its subcellular location is the nucleus. Component of the cytosolic iron-sulfur (Fe/S) protein assembly (CIA) machinery. Required for maturation of extramitochondrial Fe-S proteins. The NBP35-CFD1 heterotetramer forms a Fe-S scaffold complex, mediating the de novo assembly of an Fe-S cluster and its transfer to target apoproteins. Required for biogenesis and export of both ribosomal subunits, which may reflect a role in assembly of the Fe/S clusters in RLI1, a protein which performs rRNA processing and ribosome export. The polypeptide is Cytosolic Fe-S cluster assembly factor NBP35 (Eremothecium gossypii (strain ATCC 10895 / CBS 109.51 / FGSC 9923 / NRRL Y-1056) (Yeast)).